A 299-amino-acid polypeptide reads, in one-letter code: Inosose dehydratase (299 aa).

Belongs to the IolE/MocC family. Glutathione serves as cofactor. Co(2+) is required as a cofactor. The cofactor is Mn(2+).

It carries out the reaction scyllo-inosose = 3D-3,5/4-trihydroxycyclohexane-1,2-dione + H2O. In terms of biological role, catalyzes the dehydration of inosose (2-keto-myo-inositol, 2KMI or 2,4,6/3,5-pentahydroxycyclohexanone) to 3D-(3,5/4)-trihydroxycyclohexane-1,2-dione (D-2,3-diketo-4-deoxy-epi-inositol). The sequence is that of Inosose dehydratase from Klebsiella pneumoniae (strain 342).